The chain runs to 137 residues: Small ribosomal subunit protein uS12 (137 aa).

Disordered regions lie at residues 1-21 and 33-57; these read MPTI…KSKS and KVQT…TPRK. Asp102 carries the post-translational modification 3-methylthioaspartic acid.

The protein belongs to the universal ribosomal protein uS12 family. As to quaternary structure, part of the 30S ribosomal subunit. Contacts proteins S8 and S17. May interact with IF1 in the 30S initiation complex.

With S4 and S5 plays an important role in translational accuracy. Its function is as follows. Interacts with and stabilizes bases of the 16S rRNA that are involved in tRNA selection in the A site and with the mRNA backbone. Located at the interface of the 30S and 50S subunits, it traverses the body of the 30S subunit contacting proteins on the other side and probably holding the rRNA structure together. The combined cluster of proteins S8, S12 and S17 appears to hold together the shoulder and platform of the 30S subunit. This Streptococcus pneumoniae (strain ATCC 700669 / Spain 23F-1) protein is Small ribosomal subunit protein uS12.